The chain runs to 172 residues: Transcriptional repressor NrdR (172 aa).

A zinc finger lies at 3 to 34 (CPFCSYSDNRVLESRLAEEGESVRRRRECKQC). The region spanning 49–139 (TVVIKRNGRR…VYRKFKGVAD (91 aa)) is the ATP-cone domain.

Belongs to the NrdR family. Requires Zn(2+) as cofactor.

Functionally, negatively regulates transcription of bacterial ribonucleotide reductase nrd genes and operons by binding to NrdR-boxes. This is Transcriptional repressor NrdR from Gloeobacter violaceus (strain ATCC 29082 / PCC 7421).